The sequence spans 356 residues: Histidinol-phosphate aminotransferase (356 aa).

The residue at position 208 (lysine 208) is an N6-(pyridoxal phosphate)lysine.

It belongs to the class-II pyridoxal-phosphate-dependent aminotransferase family. Histidinol-phosphate aminotransferase subfamily. Homodimer. The cofactor is pyridoxal 5'-phosphate.

It catalyses the reaction L-histidinol phosphate + 2-oxoglutarate = 3-(imidazol-4-yl)-2-oxopropyl phosphate + L-glutamate. It functions in the pathway amino-acid biosynthesis; L-histidine biosynthesis; L-histidine from 5-phospho-alpha-D-ribose 1-diphosphate: step 7/9. The chain is Histidinol-phosphate aminotransferase from Lactococcus lactis subsp. cremoris (strain MG1363).